The following is a 425-amino-acid chain: Protein UL117 (425 aa).

Residues 59 to 83 (PTTTSSSLAPPRDDERRPTPPLRPP) are disordered.

It belongs to the herpesviridae U84 family.

It localises to the host nucleus. Plays a role in the inhibition of host DNA replication in the infected cell. Targets the mini-chromosome maintenance (MCM) complex and blocks the accumulation of MCM proteins and their loading onto host chromatin. The protein is Protein UL117 (UL117) of Homo sapiens (Human).